A 265-amino-acid polypeptide reads, in one-letter code: Mlc titration factor A (265 aa).

Residues His111, His148, His152, and Glu211 each contribute to the Zn(2+) site.

The protein belongs to the MtfA family. As to quaternary structure, interacts with Mlc. Zn(2+) is required as a cofactor.

The protein resides in the cytoplasm. Its function is as follows. Involved in the modulation of the activity of the glucose-phosphotransferase system (glucose-PTS). Interacts with the transcriptional repressor Mlc, preventing its interaction with DNA and leading to the modulation of expression of genes regulated by Mlc, including ptsG, which encodes the PTS system glucose-specific EIICB component. Shows zinc-dependent metallopeptidase activity. In Salmonella paratyphi A (strain AKU_12601), this protein is Mlc titration factor A.